The primary structure comprises 246 residues: uncharacterized protein (246 aa).

The N-terminal stretch at 1–24 (MGAPLRHCLLVAAALSLGCGVAAA) is a signal peptide. 2 helical membrane-spanning segments follow: residues 71–91 (YYLGSISGKKVIVAMTGIGLV) and 104–124 (FTCASSIAIAAVMFSGVAGGA).

The protein resides in the cell membrane. This is an uncharacterized protein from Mycobacterium tuberculosis (strain ATCC 25618 / H37Rv).